A 63-amino-acid polypeptide reads, in one-letter code: Anionic peptide NDBP7 (63 aa).

Residues 1-20 (MISRFCLLFLLVFVVSKIQA) form the signal peptide.

The protein belongs to the non-disulfide-bridged peptide (NDBP) superfamily. Long chain multifunctional peptide (group 2) family. Expressed by the venom gland.

The protein resides in the secreted. The chain is Anionic peptide NDBP7 from Lychas mucronatus (Chinese swimming scorpion).